The sequence spans 322 residues: Manganese-dependent ADP-ribose/CDP-alcohol diphosphatase (322 aa).

Residues Asp-13, Gln-15, Asp-60, Asn-96, His-228, His-265, and His-267 each coordinate Zn(2+).

This sequence belongs to the ADPRibase-Mn family. Monomer. Requires Mg(2+) as cofactor.

It catalyses the reaction CDP-choline + H2O = phosphocholine + CMP + 2 H(+). The enzyme catalyses ADP-D-ribose + H2O = D-ribose 5-phosphate + AMP + 2 H(+). It carries out the reaction CDP-glycerol + H2O = sn-glycerol 3-phosphate + CMP + 2 H(+). Its function is as follows. Hydrolyzes ADP-ribose, IDP-ribose, CDP-glycerol, CDP-choline and CDP-ethanolamine, but not other non-reducing ADP-sugars or CDP-glucose. The chain is Manganese-dependent ADP-ribose/CDP-alcohol diphosphatase (adprm) from Danio rerio (Zebrafish).